Reading from the N-terminus, the 335-residue chain is Glutamyl-tRNA reductase (335 aa).

Substrate contacts are provided by residues 60-63 (TCHR), Ser-110, 115-117 (ETE), and Gln-121. The active-site Nucleophile is Cys-61. Residue 189–194 (GYSEIN) coordinates NADP(+).

Belongs to the glutamyl-tRNA reductase family. In terms of assembly, homodimer.

The catalysed reaction is (S)-4-amino-5-oxopentanoate + tRNA(Glu) + NADP(+) = L-glutamyl-tRNA(Glu) + NADPH + H(+). It participates in porphyrin-containing compound metabolism; protoporphyrin-IX biosynthesis; 5-aminolevulinate from L-glutamyl-tRNA(Glu): step 1/2. Functionally, catalyzes the NADPH-dependent reduction of glutamyl-tRNA(Glu) to glutamate 1-semialdehyde (GSA). This is Glutamyl-tRNA reductase from Chlamydia trachomatis serovar A (strain ATCC VR-571B / DSM 19440 / HAR-13).